Consider the following 332-residue polypeptide: 2,3-diketo-L-gulonate reductase (332 aa).

Residue His44 is the Proton donor of the active site. NAD(+)-binding positions include 168 to 174, 224 to 225, and 304 to 306; these read ITMVDMS, WK, and GHE.

The protein belongs to the LDH2/MDH2 oxidoreductase family. DlgD subfamily. As to quaternary structure, homodimer.

It localises to the cytoplasm. The catalysed reaction is 3-dehydro-L-gulonate + NAD(+) = 2,3-dioxo-L-gulonate + NADH + H(+). It catalyses the reaction 3-dehydro-L-gulonate + NADP(+) = 2,3-dioxo-L-gulonate + NADPH + H(+). Catalyzes the reduction of 2,3-diketo-L-gulonate in the presence of NADH, to form 3-keto-L-gulonate. The chain is 2,3-diketo-L-gulonate reductase from Escherichia coli O1:K1 / APEC.